Consider the following 747-residue polypeptide: Photosystem I P700 chlorophyll a apoprotein A2 (747 aa).

Helical transmembrane passes span 46–69 (LFAT…FHIA), 135–158 (LFQG…LHLQ), 175–199 (LNHH…HVAI), 273–291 (IAHH…GHMY), 341–364 (LHFQ…QHMG), 380–406 (SALY…IFFV), 428–450 (ALIS…IYVH), and 530–548 (FLVH…LILI). [4Fe-4S] cluster is bound by residues Cys572 and Cys581. 2 helical membrane passes run 588 to 609 (ATYL…YWHW) and 656 to 678 (LSPW…MFLI). His667, Met675, and Tyr683 together coordinate divinyl chlorophyll a. Trp684 contacts phylloquinone. Residues 720–740 (LVGLTHFTVGNFVTFGAFVIA) traverse the membrane as a helical segment.

Belongs to the PsaA/PsaB family. In terms of assembly, the PsaA/B heterodimer binds the P700 divinyl chlorophyll special pair and subsequent electron acceptors. PSI consists of a core antenna complex that captures photons, and an electron transfer chain that converts photonic excitation into a charge separation. The cyanobacterial PSI reaction center is composed of one copy each of PsaA,B,C,D,E,F,I,J,K,L,M and X, and forms trimeric complexes. PSI electron transfer chain: 5 divinyl chlorophyll a, 1 divinyl chlorophyll a', 2 phylloquinones and 3 4Fe-4S clusters. PSI core antenna: 90 divinyl chlorophyll a, 22 carotenoids, 3 phospholipids and 1 galactolipid. P700 is a divinyl chlorophyll a/divinyl chlorophyll a' dimer, A0 is one or more divinyl chlorophyll a, A1 is one or both phylloquinones and FX is a shared 4Fe-4S iron-sulfur center. is required as a cofactor.

Its subcellular location is the cellular thylakoid membrane. It carries out the reaction reduced [plastocyanin] + hnu + oxidized [2Fe-2S]-[ferredoxin] = oxidized [plastocyanin] + reduced [2Fe-2S]-[ferredoxin]. PsaA and PsaB bind P700, the primary electron donor of photosystem I (PSI), as well as the electron acceptors A0, A1 and FX. PSI is a plastocyanin/cytochrome c6-ferredoxin oxidoreductase, converting photonic excitation into a charge separation, which transfers an electron from the donor P700 chlorophyll pair to the spectroscopically characterized acceptors A0, A1, FX, FA and FB in turn. Oxidized P700 is reduced on the lumenal side of the thylakoid membrane by plastocyanin or cytochrome c6. In Prochlorococcus marinus (strain SARG / CCMP1375 / SS120), this protein is Photosystem I P700 chlorophyll a apoprotein A2.